A 314-amino-acid polypeptide reads, in one-letter code: tRNA pseudouridine synthase B (314 aa).

His43 is a substrate binding site. Asp48 (nucleophile) is an active-site residue. Tyr76, Tyr179, and Leu200 together coordinate substrate.

This sequence belongs to the pseudouridine synthase TruB family. Type 1 subfamily.

The enzyme catalyses uridine(55) in tRNA = pseudouridine(55) in tRNA. Its function is as follows. Responsible for synthesis of pseudouridine from uracil-55 in the psi GC loop of transfer RNAs. This chain is tRNA pseudouridine synthase B, found in Pectobacterium atrosepticum (strain SCRI 1043 / ATCC BAA-672) (Erwinia carotovora subsp. atroseptica).